The following is a 329-amino-acid chain: Transmembrane protein I329L (329 aa).

An N-terminal signal peptide occupies residues 1–31; that stretch reads MLRVFIFFVFLGSGLTGRIKPQVTCKYFISE. N-linked (GlcNAc...) asparagine; by host glycans are attached at residues asparagine 32, asparagine 39, asparagine 44, asparagine 76, asparagine 82, and asparagine 101. Topologically, residues 32–239 are extracellular; that stretch reads NNTWYKYNVT…NTERYKSCYP (208 aa). One copy of the LRR repeat lies at 112–133; that stretch reads ELKFLDLRYNDLQVIDYNILRK. 2 N-linked (GlcNAc...) asparagine; by host glycosylation sites follow: asparagine 185 and asparagine 219. Cysteine 195 and cysteine 237 are joined by a disulfide. The helical transmembrane segment at 240-260 threads the bilayer; it reads LVFISILCSCISFLFLFICLL. Residues 261-329 lie on the Cytoplasmic side of the membrane; that stretch reads RSICKKYSCT…EKKVSCSRRK (69 aa).

The protein belongs to the asfivirus I329L family. In terms of processing, highly glycosylated.

It is found in the host endoplasmic reticulum membrane. It localises to the host Golgi apparatus membrane. Viral TLR3 homolog that probably prevents TLR3 dimerization and subsequent induction of IFN. Inhibits dsRNA-stimulated activation of NF-kB and IRF3. The chain is Transmembrane protein I329L from Ornithodoros (relapsing fever ticks).